We begin with the raw amino-acid sequence, 370 residues long: tRNA-specific 2-thiouridylase MnmA (370 aa).

ATP contacts are provided by residues 12–19 (GLSGGVDS) and M38. The tract at residues 98–100 (NPD) is interaction with target base in tRNA. The active-site Nucleophile is the C103. A disulfide bridge connects residues C103 and C201. G127 provides a ligand contact to ATP. The segment at 151 to 153 (KDQ) is interaction with tRNA. Residue C201 is the Cysteine persulfide intermediate of the active site. The tract at residues 319-320 (RY) is interaction with tRNA.

The protein belongs to the MnmA/TRMU family.

It localises to the cytoplasm. It carries out the reaction S-sulfanyl-L-cysteinyl-[protein] + uridine(34) in tRNA + AH2 + ATP = 2-thiouridine(34) in tRNA + L-cysteinyl-[protein] + A + AMP + diphosphate + H(+). Functionally, catalyzes the 2-thiolation of uridine at the wobble position (U34) of tRNA, leading to the formation of s(2)U34. The sequence is that of tRNA-specific 2-thiouridylase MnmA from Verminephrobacter eiseniae (strain EF01-2).